Here is an 86-residue protein sequence, read N- to C-terminus: Exodeoxyribonuclease 7 small subunit (86 aa).

The segment at 67-86 (LSDPAQPEASEPFDPPSHDG) is disordered.

Belongs to the XseB family. Heterooligomer composed of large and small subunits.

The protein resides in the cytoplasm. It carries out the reaction Exonucleolytic cleavage in either 5'- to 3'- or 3'- to 5'-direction to yield nucleoside 5'-phosphates.. Functionally, bidirectionally degrades single-stranded DNA into large acid-insoluble oligonucleotides, which are then degraded further into small acid-soluble oligonucleotides. This Stenotrophomonas maltophilia (strain K279a) protein is Exodeoxyribonuclease 7 small subunit.